Reading from the N-terminus, the 158-residue chain is Endoribonuclease YbeY (158 aa).

Zn(2+) contacts are provided by histidine 114, histidine 118, and histidine 124.

The protein belongs to the endoribonuclease YbeY family. Zn(2+) is required as a cofactor.

Its subcellular location is the cytoplasm. Its function is as follows. Single strand-specific metallo-endoribonuclease involved in late-stage 70S ribosome quality control and in maturation of the 3' terminus of the 16S rRNA. This chain is Endoribonuclease YbeY, found in Legionella pneumophila (strain Paris).